The following is a 569-amino-acid chain: Linoleate hydratase (569 aa).

Y87 contributes to the FAD binding site. The active-site Proton donor is Y205. V254, S300, and T524 together coordinate FAD.

The protein belongs to the oleate hydratase family. FAD is required as a cofactor.

It localises to the cell membrane. It is found in the cytoplasm. It carries out the reaction (9Z,12Z)-octadecadienoate + H2O = (10S)-hydroxy-(12Z)-octadecenoate. The catalysed reaction is (10E,12Z)-octadecadienoate + H2O = (10S)-hydroxy-(12Z)-octadecenoate. The enzyme catalyses (9Z)-octadecenoate + H2O = 10-hydroxyoctadecanoate. It catalyses the reaction (10E)-octadecenoate + H2O = 10-hydroxyoctadecanoate. It carries out the reaction (9E,11E)-octadecadienoate + H2O = 10-hydroxy-(11E)-octadecenoate. The catalysed reaction is (9Z,11E)-octadecadienoate + H2O = 10-hydroxy-(11E)-octadecenoate. The enzyme catalyses (9Z)-hexadecenoate + H2O = 10-hydroxyhexadecanoate. It catalyses the reaction (9Z,12Z,15Z)-octadecatrienoate + H2O = (10S)-hydroxy-(12Z,15Z)-octadecadienoate. It carries out the reaction (6Z,9Z,12Z)-octadecatrienoate + H2O = (10S)-hydroxy-(6Z,12Z)-octadecadienoate. The catalysed reaction is (6Z,9Z,12Z,15Z)-octadecatetraenoate + H2O = (10S)-hydroxy-(6Z,12Z,15Z)-octadecatrienoate. It functions in the pathway lipid metabolism; fatty acid metabolism. The addition of NADH or NADPH highly increases catalytic activity, likely by reducing the cofactor FAD to FADH2. The hydration and dehydration reactions are strongly inhibited by Ag(+), Fe(2+), Cu(2+), Zn(2+), Hg(2+), and Fe(3+). In terms of biological role, is involved in a saturation metabolic pathway of polyunsaturated fatty acids, that detoxifies unsaturated fatty acids and generates hydroxy fatty acids, oxo fatty acids, conjugated fatty acids such as conjugated linoleic acids (CLAs), and partially saturated trans-fatty acids as intermediates. CLA-HY catalyzes the hydration and dehydration steps in the production of 10-hydroxy-cis-12-octadecenoate, trans-10,cis-12-CLA, cis-9,trans-11-CLA, trans-9,trans-11-CLA, oleate and trans-10-octadecenoate during linoleate metabolism. Is also able to hydrate palmitoleic acid (cis-9-hexadecenoic acid), oleic acid, alpha-linolenic acid, gamma-linolenic acid, and stearidonic acid into the corresponding 10-hydroxy fatty acids, and dehydrate 10-hydroxy-cis-12,cis-15-octadecadienoic acid, 10-hydroxy-cis-6,cis-12-octadecadienoic acid, and 10-hydroxyoctadecanoic acid into the corresponding fatty acids with cis double bonds at the Delta9 position. As part of the gut microbiome, this enzyme modifies host fatty acid composition and is expected to improve human health by altering lipid metabolism related to the onset of metabolic syndrome. Shows regioselectivity for Delta9 double bond hydration, generating C10 hydroxy groups in the (S)-configuration with high enantioselectivity, when another double bond is in position 12. Is not able to hydrate fatty acids with a trans carbon-carbon double bond at Delta9 position (elaidic acid, trans-9-octadecenoic acid), fatty acid esters (methyl linoleate, monolinolein, dilinolein, and trilinolein), and conjugated fatty acids (conjugated linoleic acids), as well as fatty acids with other chain lengths, such as myristoleic acid (cis-9-tetradecenoic acid), arachidonic acid (cis-5,cis-8,cis-11,cis-14-eicosatetraenoic acid), EPA (cis-5,cis-8,cis-11,cis-14,cis-17-eicosapentaenoic acid), DHA (cis-4,cis-7,cis-10,cis-13,cis-16,cis-19-docosahexaenoic acid) and fatty acids with a cis carbon-carbon double bond at Delta11 position, such as cis-vaccenic acid and cis-11-octadecenoic acid, or fatty alcohols, such as linoleyl alcohol. Is not able to dehydrate 12-hydroxy, 3-hydroxy, and 9-hydroxy fatty acids. The protein is Linoleate hydratase of Lactiplantibacillus plantarum (Lactobacillus plantarum).